Consider the following 417-residue polypeptide: PRKCA-binding protein (417 aa).

The region spanning K22–Q105 is the PDZ domain. Zn(2+)-binding residues include C44 and C46. T82 is modified (phosphothreonine). An AH domain is found at L144 to V357. The segment at Q375–S417 is disordered. The segment covering E377 to A393 has biased composition (acidic residues). A lipid anchor (S-palmitoyl cysteine; by DHHC8) is attached at C415.

Monomer and homodimer. Interacts with CXADR. Interacts presynaptically with the glutamate receptors GRIA2, GRIA3, GRIK3, isoform 3 of GRIA4, isoform A of GRM4, GRM7 and GRM8; with NAPA and NAPB; and with BTG2. The interaction with NAPA and NAPB disrupts the interaction with GRIA2, conducting to the internalization of GRIA2. Interacts with PRKCA; with the amine transporters SLC6A2 and SLC6A3; with the channels ASIC1 and ASIC2; with the GTP-binding proteins ARF1 and ARF3; with the ephrin receptor tyrosine kinases EPHA7, EPHB1 and EPHB2; with ERBB2 and through its PDZ domain with the C-terminal tail of PRLHR. Interacts with UNC5A. Interacts (via AH domain) with NCS1/FREQ; in a calcium-dependent manner. Interacts with F-actin and associates with the ARP2/3 complex. Interacts (via PDZ domain) with ARF1 (activated); the interaction blocks Arp2/3 complex inhibition. Interacts with SORCS3. In terms of processing, phosphorylation at Thr-82 appears to inhibit the interaction with AMPA receptors. Palmitoylation on Cys-415 is essential for long-term synaptic depression (LTD).

It is found in the cytoplasm. It localises to the perinuclear region. Its subcellular location is the membrane. The protein resides in the postsynaptic density. The protein localises to the synapse. It is found in the synaptosome. It localises to the cytoskeleton. Functionally, probable adapter protein that bind to and organize the subcellular localization of a variety of membrane proteins containing some PDZ recognition sequence. Involved in the clustering of various receptors, possibly by acting at the receptor internalization level. Plays a role in synaptic plasticity by regulating the trafficking and internalization of AMPA receptors. May be regulated upon PRKCA activation. May regulate ASIC1/ASIC3 channel. Regulates actin polymerization by inhibiting the actin-nucleating activity of the Arp2/3 complex; the function is competitive with nucleation promoting factors and is linked to neuronal morphology regulation and AMPA receptor (AMPAR) endocytosis. Via interaction with the Arp2/3 complex involved in regulation of synaptic plasicity of excitatory synapses and required for spine shrinkage during long-term depression (LTD). Involved in regulation of astrocyte morphology, antagonistic to Arp2/3 complex activator WASL/N-WASP function. In Bos taurus (Bovine), this protein is PRKCA-binding protein (PICK1).